Here is a 1093-residue protein sequence, read N- to C-terminus: NACHT, LRR and PYD domains-containing protein 14 (1093 aa).

In terms of domain architecture, Pyrin spans 1 to 97; that stretch reads MADSSSSSFF…CERAKEEINW (97 aa). The tract at residues 102–121 is disordered; sequence IGPDDAKAGETQEDQEAVLG. In terms of domain architecture, NACHT spans 177-499; the sequence is QIVVLQGAAG…MFYMLKGSWE (323 aa). 183 to 190 is a binding site for ATP; it reads GAAGVGKT. 11 LRR repeats span residues 730–750, 759–780, 787–807, 816–836, 844–864, 873–894, 901–921, 930–951, 958–978, 987–1008, and 1015–1035; these read NLMH…KSLC, KLQT…NISN, SLIF…QLLC, YLER…EYLS, RLTH…KLMS, TLKS…YLST, SLTH…KLLC, NLQD…DLAS, NLRS…KILC, NIQR…DLSS, and RLIK…VKLY.

The protein belongs to the NLRP family. In terms of tissue distribution, testis-specific.

It localises to the cytoplasm. Its function is as follows. May be involved in inflammation and spermatogenesis. This is NACHT, LRR and PYD domains-containing protein 14 (NLRP14) from Homo sapiens (Human).